We begin with the raw amino-acid sequence, 492 residues long: Ferruginol synthase (492 aa).

The helical transmembrane segment at 1–21 (METIALLAALFFIALTCFLTS) threads the bilayer. Topologically, residues 22–492 (GRRRNLPPGP…VPLKIIPLRP (471 aa)) are cytoplasmic. Position 436 (Cys436) interacts with heme.

Belongs to the cytochrome P450 family. Requires heme as cofactor.

Its subcellular location is the endoplasmic reticulum membrane. It carries out the reaction abieta-8,11,13-triene + reduced [NADPH--hemoprotein reductase] + O2 = ferruginol + oxidized [NADPH--hemoprotein reductase] + H2O + H(+). The protein operates within secondary metabolite biosynthesis; terpenoid biosynthesis. Cytochrome P450 enzyme (CYP) which catalyzes a unique two-electron oxidation cascade on abieta-8,11,13-triene to produce ferruginol, an intermediate in tanshinone biosynthesis. The protein is Ferruginol synthase of Isodon rubescens (Rabdosia rubescens).